A 461-amino-acid polypeptide reads, in one-letter code: Cysteine--tRNA ligase (461 aa).

Cys28 is a binding site for Zn(2+). The 'HIGH' region signature appears at 30 to 40 (VTIYDLCHIGH). Residues Cys209, His234, and Glu238 each coordinate Zn(2+). The short motif at 266–270 (KMSKS) is the 'KMSKS' region element. Residue Lys269 participates in ATP binding.

This sequence belongs to the class-I aminoacyl-tRNA synthetase family. In terms of assembly, monomer. It depends on Zn(2+) as a cofactor.

It localises to the cytoplasm. The enzyme catalyses tRNA(Cys) + L-cysteine + ATP = L-cysteinyl-tRNA(Cys) + AMP + diphosphate. In Hamiltonella defensa subsp. Acyrthosiphon pisum (strain 5AT), this protein is Cysteine--tRNA ligase.